A 170-amino-acid polypeptide reads, in one-letter code: Endoribonuclease YbeY (170 aa).

Zn(2+) is bound by residues His-118, His-122, and His-128.

It belongs to the endoribonuclease YbeY family. It depends on Zn(2+) as a cofactor.

Its subcellular location is the cytoplasm. Single strand-specific metallo-endoribonuclease involved in late-stage 70S ribosome quality control and in maturation of the 3' terminus of the 16S rRNA. The protein is Endoribonuclease YbeY of Mycobacteroides abscessus (strain ATCC 19977 / DSM 44196 / CCUG 20993 / CIP 104536 / JCM 13569 / NCTC 13031 / TMC 1543 / L948) (Mycobacterium abscessus).